A 405-amino-acid chain; its full sequence is Replication factor C large subunit (405 aa).

Residue 47–54 (GPPGVGKT) participates in ATP binding.

The protein belongs to the activator 1 small subunits family. RfcL subfamily. In terms of assembly, heteropentamer composed of four small subunits (RfcS) and one large subunit (RfcL). Probably interacts with PCNA subunit PCNA3.

In terms of biological role, part of the RFC clamp loader complex which loads the PCNA sliding clamp onto DNA. The complex possesses DNA-dependent ATPase activity. This is Replication factor C large subunit (rfcL) from Saccharolobus solfataricus (strain ATCC 35092 / DSM 1617 / JCM 11322 / P2) (Sulfolobus solfataricus).